The following is a 407-amino-acid chain: Magnesium-protoporphyrin IX monomethyl ester [oxidative] cyclase 1, chloroplastic (407 aa).

Polar residues predominate over residues 1–10 (MQTTLKQQRA). The segment at 1-28 (MQTTLKQQRASGRVSARQPFRSAAVARP) is disordered.

Belongs to the AcsF family. Fe cation serves as cofactor.

Its subcellular location is the plastid. The protein resides in the chloroplast thylakoid membrane. It carries out the reaction Mg-protoporphyrin IX 13-monomethyl ester + 3 NADPH + 3 O2 + 2 H(+) = 3,8-divinyl protochlorophyllide a + 3 NADP(+) + 5 H2O. Its pathway is porphyrin-containing compound metabolism; chlorophyll biosynthesis. Functionally, catalyzes the formation of the isocyclic ring in chlorophyll biosynthesis under oxygen- and copper-deficient conditions. Mediates the cyclase reaction, which results in the formation of divinylprotochlorophyllide (Pchlide) characteristic of all chlorophylls from magnesium-protoporphyrin IX 13-monomethyl ester (MgPMME). The polypeptide is Magnesium-protoporphyrin IX monomethyl ester [oxidative] cyclase 1, chloroplastic (CRD1) (Chlamydomonas reinhardtii (Chlamydomonas smithii)).